We begin with the raw amino-acid sequence, 1202 residues long: Putative late blight resistance protein homolog R1B-8 (1202 aa).

Coiled-coil stretches lie at residues 345-368 and 437-459; these read RYSD…ESLQ and LRMN…RLLN. Residues 426–741 form the NB-ARC domain; the sequence is IARTSSQLAR…ISESFIKSCE (316 aa). Residue 471-478 participates in ATP binding; it reads GMPGLGKT. LRR repeat units lie at residues 865–889, 908–936, 1011–1036, 1040–1059, 1060–1084, 1086–1111, and 1128–1151; these read FKFL…LFYL, LWNL…VWDM, PIRL…ISAP, YLKL…TADH, LKHL…VSNG, FPQL…VFPN, and SCFM…VVQS.

This sequence belongs to the disease resistance NB-LRR family.

Its subcellular location is the cytoplasm. The protein resides in the membrane. Confers resistance to late blight (Phytophthora infestans) races carrying the avirulence gene Avr1. Resistance proteins guard the plant against pathogens that contain an appropriate avirulence protein via an indirect interaction with this avirulence protein. That triggers a defense system including the hypersensitive response, which restricts the pathogen growth. The chain is Putative late blight resistance protein homolog R1B-8 (R1B-8) from Solanum demissum (Wild potato).